A 225-amino-acid polypeptide reads, in one-letter code: Cell division protein SepF (225 aa).

The tract at residues 22-116 (EYLDEPEPAR…TRGALAVDTR (95 aa)) is disordered. Composition is skewed to basic and acidic residues over residues 28 to 54 (EPAR…RDFA) and 77 to 86 (RYDGPRHSSR).

Belongs to the SepF family. Homodimer. Interacts with FtsZ.

Its subcellular location is the cytoplasm. Its function is as follows. Cell division protein that is part of the divisome complex and is recruited early to the Z-ring. Probably stimulates Z-ring formation, perhaps through the cross-linking of FtsZ protofilaments. Its function overlaps with FtsA. This is Cell division protein SepF from Rhodococcus jostii (strain RHA1).